Consider the following 265-residue polypeptide: MSKITALFKELKATGKKGLIPFIAAGDPDPKQTVELMHALVRGGSSVIELGVPFSDPMADGPVIQRLSERALTHGVTLHSCLEMVKEFRKKDANTPVVLMGYANPVEQMGAERFATEAKAAGVDGVLVVDCPPEECVDFAARMRVAGIDPIFLLAPTSSQERIKGAAKIASGYIYYVSMRGVTGASHLNTQDVASIIPKIREETDIPIAVGFGISDAASAKAVSTSADAVVIGSQIIRLLEDAPSGQAVQSLETFIREIRDALDS.

Catalysis depends on proton acceptor residues E49 and D60.

Belongs to the TrpA family. In terms of assembly, tetramer of two alpha and two beta chains.

The catalysed reaction is (1S,2R)-1-C-(indol-3-yl)glycerol 3-phosphate + L-serine = D-glyceraldehyde 3-phosphate + L-tryptophan + H2O. The protein operates within amino-acid biosynthesis; L-tryptophan biosynthesis; L-tryptophan from chorismate: step 5/5. Its function is as follows. The alpha subunit is responsible for the aldol cleavage of indoleglycerol phosphate to indole and glyceraldehyde 3-phosphate. The chain is Tryptophan synthase alpha chain from Polynucleobacter necessarius subsp. necessarius (strain STIR1).